Reading from the N-terminus, the 80-residue chain is Small ribosomal subunit protein uS17 (80 aa).

Belongs to the universal ribosomal protein uS17 family. As to quaternary structure, part of the 30S ribosomal subunit.

Its function is as follows. One of the primary rRNA binding proteins, it binds specifically to the 5'-end of 16S ribosomal RNA. This chain is Small ribosomal subunit protein uS17, found in Chelativorans sp. (strain BNC1).